The primary structure comprises 210 residues: N-(5'-phosphoribosyl)anthranilate isomerase (210 aa).

The protein belongs to the TrpF family.

It carries out the reaction N-(5-phospho-beta-D-ribosyl)anthranilate = 1-(2-carboxyphenylamino)-1-deoxy-D-ribulose 5-phosphate. It participates in amino-acid biosynthesis; L-tryptophan biosynthesis; L-tryptophan from chorismate: step 3/5. In Eremothecium gossypii (strain ATCC 10895 / CBS 109.51 / FGSC 9923 / NRRL Y-1056) (Yeast), this protein is N-(5'-phosphoribosyl)anthranilate isomerase (TRP1).